A 642-amino-acid polypeptide reads, in one-letter code: Threonine--tRNA ligase (642 aa).

The 61-residue stretch at 1-61 (MPVITLPDGS…DTDAQLAIIT (61 aa)) folds into the TGS domain. The catalytic stretch occupies residues 243 to 534 (DHRKIGKQLD…LTEEFAGFFP (292 aa)). Residues Cys-334, His-385, and His-511 each contribute to the Zn(2+) site.

It belongs to the class-II aminoacyl-tRNA synthetase family. Homodimer. Zn(2+) serves as cofactor.

It localises to the cytoplasm. It catalyses the reaction tRNA(Thr) + L-threonine + ATP = L-threonyl-tRNA(Thr) + AMP + diphosphate + H(+). Functionally, catalyzes the attachment of threonine to tRNA(Thr) in a two-step reaction: L-threonine is first activated by ATP to form Thr-AMP and then transferred to the acceptor end of tRNA(Thr). Also edits incorrectly charged L-seryl-tRNA(Thr). The polypeptide is Threonine--tRNA ligase (Pectobacterium carotovorum subsp. carotovorum (strain PC1)).